A 655-amino-acid polypeptide reads, in one-letter code: Gastrulation defective protein 1 homolog (655 aa).

Disordered stretches follow at residues 1 to 54 (MQRG…EQMI) and 83 to 165 (AKVF…DEQS). Composition is skewed to basic and acidic residues over residues 23 to 36 (RSNE…KEST), 91 to 115 (QIEK…KEDD), and 134 to 146 (TDKE…SSKD). Residues 147–164 (EDSDDDDYSSDEDSDDEQ) are compositionally biased toward acidic residues. WD repeat units lie at residues 180-219 (HGSR…SSMR), 227-268 (CENH…ECCK), 281-321 (GHVA…EQLQ), 330-369 (GLRT…VNTT), 377-416 (QKGS…QPLH), 422-467 (FSRY…EVQR), and 470-510 (VSNA…RGAK). Disordered stretches follow at residues 544-580 (KSRT…VASS) and 633-655 (AIFS…EADK). 2 stretches are compositionally biased toward basic and acidic residues: residues 554-564 (KARMDPVKSQR) and 639-655 (LPAD…EADK).

Belongs to the WD repeat GAD-1 family.

This chain is Gastrulation defective protein 1 homolog, found in Drosophila melanogaster (Fruit fly).